A 179-amino-acid polypeptide reads, in one-letter code: Embryo-specific protein ATS3A (179 aa).

An N-terminal signal peptide occupies residues 1 to 22; sequence MLRLAIPLFLFALCSFTLFSSA. Residues 48 to 158 form the PLAT domain; the sequence is CSYTVIIKTS…NSVWYGFNVC (111 aa).

Interacts with EULS3 (via N-terminus). Expressed in roots, rosette leaves, stems, cauline leaves and flowers.

The protein resides in the secreted. May play a role during embryo development. The chain is Embryo-specific protein ATS3A from Arabidopsis thaliana (Mouse-ear cress).